The following is a 263-amino-acid chain: Small ribosomal subunit protein uS2 (263 aa).

The protein belongs to the universal ribosomal protein uS2 family.

The polypeptide is Small ribosomal subunit protein uS2 (Roseiflexus castenholzii (strain DSM 13941 / HLO8)).